The sequence spans 82 residues: ATP synthase subunit c, chloroplastic (82 aa).

2 helical membrane-spanning segments follow: residues 7–27 (AASVVASGLSVGLAAIGPGIG) and 57–77 (LAFMESLTIYGLVVALALLFA).

Belongs to the ATPase C chain family. As to quaternary structure, F-type ATPases have 2 components, F(1) - the catalytic core - and F(0) - the membrane proton channel. F(1) has five subunits: alpha(3), beta(3), gamma(1), delta(1), epsilon(1). F(0) has four main subunits: a(1), b(1), b'(1) and c(10-14). The alpha and beta chains form an alternating ring which encloses part of the gamma chain. F(1) is attached to F(0) by a central stalk formed by the gamma and epsilon chains, while a peripheral stalk is formed by the delta, b and b' chains.

Its subcellular location is the plastid. The protein localises to the chloroplast thylakoid membrane. Its function is as follows. F(1)F(0) ATP synthase produces ATP from ADP in the presence of a proton or sodium gradient. F-type ATPases consist of two structural domains, F(1) containing the extramembraneous catalytic core and F(0) containing the membrane proton channel, linked together by a central stalk and a peripheral stalk. During catalysis, ATP synthesis in the catalytic domain of F(1) is coupled via a rotary mechanism of the central stalk subunits to proton translocation. Key component of the F(0) channel; it plays a direct role in translocation across the membrane. A homomeric c-ring of between 10-14 subunits forms the central stalk rotor element with the F(1) delta and epsilon subunits. The chain is ATP synthase subunit c, chloroplastic from Rhodomonas salina (Cryptomonas salina).